The chain runs to 609 residues: X-ray repair cross-complementing protein 6 (609 aa).

A disordered region spans residues 1 to 28; sequence MSGWESYYKTEGDEEAEEEQEENLEASG. An N-acetylserine modification is found at Ser-2. Ser-2 is subject to Phosphoserine. A Phosphoserine; by PRKDC modification is found at Ser-6. The segment covering 12–24 has biased composition (acidic residues); it reads GDEEAEEEQEENL. The residue at position 27 (Ser-27) is a Phosphoserine. The active-site Schiff-base intermediate with DNA; for 5'-deoxyribose-5-phosphate lyase activity is Lys-31. Lys-31 bears the N6-acetyllysine mark. Ser-51 bears the Phosphoserine; by PRKDC mark. Residues 261–468 form the Ku domain; sequence LKLNKDIVIS…VGKMKAIVEK (208 aa). The tract at residues 277–341 is DNA-binding; that stretch reads VQKALKPPPI…EETEELKRFD (65 aa). Residue Lys-287 forms a Glycyl lysine isopeptide (Lys-Gly) (interchain with G-Cter in SUMO2) linkage. A Phosphoserine modification is found at Ser-306. 3 positions are modified to N6-acetyllysine: Lys-317, Lys-331, and Lys-338. Residue Lys-317 forms a Glycyl lysine isopeptide (Lys-Gly) (interchain with G-Cter in SUMO2) linkage. Positions 373 to 482 are interaction with XRCC5; sequence SLVIGSSTLF…YRSDSFENPV (110 aa). The residue at position 455 (Thr-455) is a Phosphothreonine. At Lys-461 the chain carries N6-acetyllysine. Residues Ser-477 and Ser-520 each carry the phosphoserine modification. The segment at 536–562 is disordered; sequence PEGKVTKRKHDNEGSGSKRPKVEYSEE. Residues Lys-539, Lys-542, and Lys-544 each carry the N6-acetyllysine modification. Ser-550 carries the phosphoserine modification. Residues 550-609 are interaction with DEAF1; it reads SGSKRPKVEYSEEELKTHISKGTLGKFTVPMLKEACRAYGLKSGLKKQELLEALTKHFQD. Lys-553 and Lys-556 each carry N6-acetyllysine. A Glycyl lysine isopeptide (Lys-Gly) (interchain with G-Cter in SUMO2) cross-link involves residue Lys-556. Residue Ser-560 is modified to Phosphoserine. N6,N6,N6-trimethyllysine is present on Lys-570. The SAP domain maps to 573 to 607; that stretch reads LGKFTVPMLKEACRAYGLKSGLKKQELLEALTKHF. The segment at 578-583 is interaction with BAX; sequence VPMLKE.

It belongs to the ku70 family. Forms a heterodimer with XRCC5/Ku80; heterodimerization stabilizes XRCC5 protein. Component of the core long-range non-homologous end joining (NHEJ) complex (also named DNA-PK complex) composed of PRKDC, LIG4, XRCC4, XRCC6/Ku70, XRCC5/Ku86 and NHEJ1/XLF. Additional component of the NHEJ complex includes PAXX. Following autophosphorylation, PRKDC dissociates from DNA, leading to formation of the short-range NHEJ complex, composed of LIG4, XRCC4, XRCC6/Ku70, XRCC5/Ku86 and NHEJ1/XLF. The XRCC5-XRCC6 dimer also associates with NAA15, and this complex binds to the osteocalcin promoter and activates osteocalcin expression. In addition, XRCC6 interacts with the osteoblast-specific transcription factors MSX2, RUNX2 and DLX5. Interacts with ELF3. Interacts with ATP23. The XRCC5-XRRC6 dimer associates in a DNA-dependent manner with APEX1. Binds to CDK9 isoform 2. Identified in a complex with DEAF1 and XRCC5. Interacts with DEAF1 (via the SAND domain); the interaction is direct and may be inhibited by DNA-binding. Interacts with CLU. Interacts with NR4A3; the DNA-dependent protein kinase complex DNA-PK phosphorylates and activates NR4A3 and prevents NR4A3 ubiquitinylation and degradation. Interacts with CYREN isoform 1 (CYREN-1) and isoform 4 (CYREN-2) (via KBM motif). Interacts (via N-terminus) with HSF1 (via N-terminus); this interaction is direct and prevents XRCC5/XRCC6 heterodimeric binding and non-homologous end joining (NHEJ) repair activities induced by ionizing radiation (IR). Part of the HDP-RNP complex composed of at least HEXIM1, PRKDC, XRCC5, XRCC6, paraspeckle proteins (SFPQ, NONO, PSPC1, RBM14, and MATR3) and NEAT1 RNA. Interacts with HMBOX1. Interacts with ATF7. Interacts with APLF (via KBM motif). Interacts with WRN (via KBM motif). The XRCC5-XRCC6 dimer associates with ALKBH2. Interacts with TPRN; TPRN interacts with a number of DNA damage response proteins, is recruited to sites of DNA damage and may play a role in DNA damage repair. When not acetylated, interacts with BAX. Interacts with ERCC6L2. In terms of assembly, (Microbial infection) Interacts with human T-cell leukemia virus 1/HTLV-1 protein HBZ. In terms of processing, phosphorylation by PRKDC may enhance helicase activity. Phosphorylation of Ser-51 does not affect DNA repair. Post-translationally, ADP-ribosylated by PARP3. Methylation by SETD4 leads to accumulation in the cytoplasm and is a prerequisite for acetylation, possibly due to the change of subcellular from the nucleus to the cytosol initiated by methylation, acetylation occurring in the cytosol. In terms of processing, acetylation can be catalyzed in vitro by CREBBP/CBP and KAT2B/PCAF.

Its subcellular location is the nucleus. The protein localises to the chromosome. It is found in the cytoplasm. Functionally, single-stranded DNA-dependent ATP-dependent helicase that plays a key role in DNA non-homologous end joining (NHEJ) by recruiting DNA-PK to DNA. Required for double-strand break repair and V(D)J recombination. Also has a role in chromosome translocation. Has a role in chromosome translocation. The DNA helicase II complex binds preferentially to fork-like ends of double-stranded DNA in a cell cycle-dependent manner. It works in the 3'-5' direction. During NHEJ, the XRCC5-XRRC6 dimer performs the recognition step: it recognizes and binds to the broken ends of the DNA and protects them from further resection. Binding to DNA may be mediated by XRCC6. The XRCC5-XRRC6 dimer acts as a regulatory subunit of the DNA-dependent protein kinase complex DNA-PK by increasing the affinity of the catalytic subunit PRKDC to DNA by 100-fold. The XRCC5-XRRC6 dimer is probably involved in stabilizing broken DNA ends and bringing them together. The assembly of the DNA-PK complex to DNA ends is required for the NHEJ ligation step. Probably also acts as a 5'-deoxyribose-5-phosphate lyase (5'-dRP lyase), by catalyzing the beta-elimination of the 5' deoxyribose-5-phosphate at an abasic site near double-strand breaks. 5'-dRP lyase activity allows to 'clean' the termini of abasic sites, a class of nucleotide damage commonly associated with strand breaks, before such broken ends can be joined. The XRCC5-XRRC6 dimer together with APEX1 acts as a negative regulator of transcription. In association with NAA15, the XRCC5-XRRC6 dimer binds to the osteocalcin promoter and activates osteocalcin expression. Plays a role in the regulation of DNA virus-mediated innate immune response by assembling into the HDP-RNP complex, a complex that serves as a platform for IRF3 phosphorylation and subsequent innate immune response activation through the cGAS-STING pathway. Negatively regulates apoptosis by interacting with BAX and sequestering it from the mitochondria. Might have deubiquitination activity, acting on BAX. The polypeptide is X-ray repair cross-complementing protein 6 (XRCC6) (Homo sapiens (Human)).